A 446-amino-acid polypeptide reads, in one-letter code: Phosphoglucosamine mutase (446 aa).

Ser100 functions as the Phosphoserine intermediate in the catalytic mechanism. The Mg(2+) site is built by Ser100, Asp241, Asp243, and Asp245. Ser100 is modified (phosphoserine).

It belongs to the phosphohexose mutase family. Mg(2+) serves as cofactor. Activated by phosphorylation.

It catalyses the reaction alpha-D-glucosamine 1-phosphate = D-glucosamine 6-phosphate. In terms of biological role, catalyzes the conversion of glucosamine-6-phosphate to glucosamine-1-phosphate. This Methylorubrum extorquens (strain CM4 / NCIMB 13688) (Methylobacterium extorquens) protein is Phosphoglucosamine mutase.